The chain runs to 748 residues: Antigen peptide transporter 1 (748 aa).

Over 1–15 (MASSRCPAPRGCRCL) the chain is Cytoplasmic. The helical transmembrane segment at 16-36 (PGASLAWLGTVLLFLADWVLL) threads the bilayer. At 37 to 53 (RTALPRIFSLLVPTALP) the chain is on the lumenal side. Residues 54–76 (LLRVWAVGLSRWAVLWLGACGVL) traverse the membrane as a helical segment. The Cytoplasmic portion of the chain corresponds to 77–92 (RATVGSKSENAGAQGW). A helical membrane pass occupies residues 93 to 113 (LAALEPLAAALGLALPGLALF). Residues 114–133 (RELISWGAPGSADSTRLLHW) are Lumenal-facing. Residues 134–154 (GSHPSAFVVSYAAALPAAALW) form a helical membrane-spanning segment. Over 155 to 186 (HKLGSLWVPGGQGGSGNPVRRLLGCLGSETRR) the chain is Cytoplasmic. Residues 187–207 (LSLFLVLVVLSSLGEMAIPFF) traverse the membrane as a helical segment. In terms of domain architecture, ABC transmembrane type-1 spans 187–470 (LSLFLVLVVL…LLSIYPRVQK (284 aa)). Residues 208–227 (TGRLTDWILQDGSADTFTRN) lie on the Lumenal side of the membrane. The chain crosses the membrane as a helical span at residues 228–248 (LTLMSILTIASAVLEFVGDGI). At 249–298 (YNNTMGHVHSHLQGEVFGAVLRQETEFFQQNQTGNITSRVTEDTSTLSDS) the chain is on the cytoplasmic side. The chain crosses the membrane as a helical span at residues 299 to 319 (LSENLSLFLWYLVRGLCLLGI). Residues 320–328 (MLWGSVSLT) are Lumenal-facing. Residues 329-349 (MVTLVTLPLLFLLPKKVGKWY) traverse the membrane as a helical segment. Over 350 to 418 (QLLEVQVRES…AVNSWTTSIS (69 aa)) the chain is Cytoplasmic. The tract at residues 375–420 (PTVRSFANEEGEAQKFREKLQEIKTLNQKEAVAYAVNSWTTSISGM) is part of the peptide-binding site. A helical membrane pass occupies residues 419–439 (GMLLKVGILYIGGQLVTSGAV). Over 440–443 (SSGN) the chain is Lumenal. The helical transmembrane segment at 444 to 464 (LVTFVLYQMQFTQAVEVLLSI) threads the bilayer. The part of the peptide-binding site stretch occupies residues 453–487 (QFTQAVEVLLSIYPRVQKAVGSSEKIFEYLDRTPR). Residues 465-748 (YPRVQKAVGS…MVQAPADAPE (284 aa)) lie on the Cytoplasmic side of the membrane. The 240-residue stretch at 503–742 (VQFQDVSFAY…KGCYWAMVQA (240 aa)) folds into the ABC transporter domain. Residues 538–546 (GPNGSGKST), 641–647 (SQLSGGQ), and Gln-701 each bind ATP. Ser-545 provides a ligand contact to Mg(2+).

It belongs to the ABC transporter superfamily. ABCB family. MHC peptide exporter (TC 3.A.1.209) subfamily. As to quaternary structure, heterodimer of TAP1 and TAP2 (TAP1-TAP2). A component of the peptide loading complex (PLC), interacts via TAPBP with MHCI heterodimer; this interaction mediates peptide-MHCI assembly. Interacts with PSMB5 and PSMB8. The cofactor is Mg(2+).

The protein resides in the endoplasmic reticulum membrane. The catalysed reaction is a peptide antigen(in) + ATP + H2O = a peptide antigen(out) + ADP + phosphate + H(+). Its function is as follows. ABC transporter associated with antigen processing. In complex with TAP2 mediates unidirectional translocation of peptide antigens from cytosol to endoplasmic reticulum (ER) for loading onto MHC class I (MHCI) molecules. Uses the chemical energy of ATP to export peptides against the concentration gradient. During the transport cycle alternates between 'inward-facing' state with peptide binding site facing the cytosol to 'outward-facing' state with peptide binding site facing the ER lumen. Peptide antigen binding to ATP-loaded TAP1-TAP2 induces a switch to hydrolysis-competent 'outward-facing' conformation ready for peptide loading onto nascent MHCI molecules. Subsequently ATP hydrolysis resets the transporter to the 'inward facing' state for a new cycle. As a component of the peptide loading complex (PLC), acts as a molecular scaffold essential for peptide-MHCI assembly and antigen presentation. This chain is Antigen peptide transporter 1 (TAP1), found in Gorilla gorilla gorilla (Western lowland gorilla).